Here is a 97-residue protein sequence, read N- to C-terminus: MQQNEPTHYVIPDGEGNEFKFAERLRYESPRSSKTYIFLEPVGADYDEAEEVDIFVYELEEYGEGDDDFNLVPIAEDDAETWDEIEEVFNTLEDELD.

This sequence belongs to the UPF0473 family.

In Exiguobacterium sibiricum (strain DSM 17290 / CCUG 55495 / CIP 109462 / JCM 13490 / 255-15), this protein is UPF0473 protein Exig_2070.